Consider the following 254-residue polypeptide: Imidazole glycerol phosphate synthase subunit HisF (254 aa).

Active-site residues include Asp11 and Asp130.

Belongs to the HisA/HisF family. As to quaternary structure, heterodimer of HisH and HisF.

It localises to the cytoplasm. It carries out the reaction 5-[(5-phospho-1-deoxy-D-ribulos-1-ylimino)methylamino]-1-(5-phospho-beta-D-ribosyl)imidazole-4-carboxamide + L-glutamine = D-erythro-1-(imidazol-4-yl)glycerol 3-phosphate + 5-amino-1-(5-phospho-beta-D-ribosyl)imidazole-4-carboxamide + L-glutamate + H(+). The protein operates within amino-acid biosynthesis; L-histidine biosynthesis; L-histidine from 5-phospho-alpha-D-ribose 1-diphosphate: step 5/9. In terms of biological role, IGPS catalyzes the conversion of PRFAR and glutamine to IGP, AICAR and glutamate. The HisF subunit catalyzes the cyclization activity that produces IGP and AICAR from PRFAR using the ammonia provided by the HisH subunit. The chain is Imidazole glycerol phosphate synthase subunit HisF from Laribacter hongkongensis (strain HLHK9).